Consider the following 279-residue polypeptide: Biotin synthase (279 aa).

The region spanning 1-227 (MKVYLCAISN…NAMIMVAGGR (227 aa)) is the Radical SAM core domain. Positions 16, 20, and 23 each coordinate [4Fe-4S] cluster. Residues C60, C95, and C153 each contribute to the [2Fe-2S] cluster site.

The protein belongs to the radical SAM superfamily. Biotin synthase family. Homodimer. It depends on [4Fe-4S] cluster as a cofactor. [2Fe-2S] cluster is required as a cofactor.

The catalysed reaction is (4R,5S)-dethiobiotin + (sulfur carrier)-SH + 2 reduced [2Fe-2S]-[ferredoxin] + 2 S-adenosyl-L-methionine = (sulfur carrier)-H + biotin + 2 5'-deoxyadenosine + 2 L-methionine + 2 oxidized [2Fe-2S]-[ferredoxin]. It functions in the pathway cofactor biosynthesis; biotin biosynthesis; biotin from 7,8-diaminononanoate: step 2/2. In terms of biological role, catalyzes the conversion of dethiobiotin (DTB) to biotin by the insertion of a sulfur atom into dethiobiotin via a radical-based mechanism. This chain is Biotin synthase, found in Nitratiruptor sp. (strain SB155-2).